We begin with the raw amino-acid sequence, 367 residues long: Probable cinnamyl alcohol dehydrogenase (367 aa).

C47 lines the Zn(2+) pocket. An NADP(+)-binding site is contributed by T49. Zn(2+)-binding residues include H69, E70, C100, C103, C106, C114, and C163. NADP(+) is bound by residues T167, 188-193 (GLGGVG), 211-216 (SSSSKK), T251, G275, and 298-300 (SFI).

Belongs to the zinc-containing alcohol dehydrogenase family. In terms of assembly, homodimer. Zn(2+) serves as cofactor.

It carries out the reaction (E)-cinnamyl alcohol + NADP(+) = (E)-cinnamaldehyde + NADPH + H(+). The catalysed reaction is (E)-coniferol + NADP(+) = (E)-coniferaldehyde + NADPH + H(+). It catalyses the reaction (E)-sinapyl alcohol + NADP(+) = (E)-sinapaldehyde + NADPH + H(+). The enzyme catalyses (E)-4-coumaroyl alcohol + NADP(+) = (E)-4-coumaraldehyde + NADPH + H(+). It carries out the reaction (E)-caffeyl alcohol + NADP(+) = (E)-caffeyl aldehyde + NADPH + H(+). It functions in the pathway aromatic compound metabolism; phenylpropanoid biosynthesis. In terms of biological role, involved in lignin biosynthesis. May catalyze the final step specific for the production of lignin monomers, like coniferyl alcohol, sinapyl alcohol and 4-coumaryl alcohol. The polypeptide is Probable cinnamyl alcohol dehydrogenase (Zea mays (Maize)).